Consider the following 159-residue polypeptide: Heterocyst differentiation protein HetP (159 aa).

The required to complement a hetP deletion stretch occupies residues 1–50 (MNQNTTGITNYNKAINPQQFDKVVEAILAGKYSWACVLMLRFAGYNPMHY).

The protein belongs to the HetP family. As to quaternary structure, in bacterial two-hybrid assays interacts weakly with Asl1930, Alr2902 and Alr3234.

Its function is as follows. Promotes heterocyst differentiation and commitment when nitrogen is limiting. Interplay between the 4 HetP paralogs controls the timing of commitment to heterocyst formation and its duration. Epistatic analysis show that the 3 paralogs act upstream of hetP to delay commitment (asl1930, alr3234) or inhibit development (alr2902). Asl1930 and Alr3234 must also attenuate the activity of Alr2902. Required for heterocyst formation. Functions directly downstream of master regulator HetR to promote heterocyst differentiation, functioning downstream of patterning (cell choice). Partially functionally redundant with homologs alr2902 and asl1930 but not alr3234. Overexpression leads to more than wild-type levels of heterocysts. Overexpression in the absence of hetR partially bypasses hetR deletion, allowing differentiation of heterocysts, although they only fix nitrogen in the absence of oxygen (a Fox- Fix+ phenotype), suggesting they are not fully. The polypeptide is Heterocyst differentiation protein HetP (Nostoc sp. (strain PCC 7120 / SAG 25.82 / UTEX 2576)).